The sequence spans 55 residues: ATP synthase F(0) complex subunit 8 (55 aa).

The helical transmembrane segment at 4–24 (LNPAPWFTILVFSWMIFLAII) threads the bilayer. Residues 32–41 (TSPNDSSPLS) show a composition bias toward polar residues. Positions 32–55 (TSPNDSSPLSTEKHKTESWDWPWQ) are disordered.

The protein belongs to the ATPase protein 8 family. As to quaternary structure, component of the ATP synthase complex composed at least of ATP5F1A/subunit alpha, ATP5F1B/subunit beta, ATP5MC1/subunit c (homooctomer), MT-ATP6/subunit a, MT-ATP8/subunit 8, ATP5ME/subunit e, ATP5MF/subunit f, ATP5MG/subunit g, ATP5MK/subunit k, ATP5MJ/subunit j, ATP5F1C/subunit gamma, ATP5F1D/subunit delta, ATP5F1E/subunit epsilon, ATP5PF/subunit F6, ATP5PB/subunit b, ATP5PD/subunit d, ATP5PO/subunit OSCP. ATP synthase complex consists of a soluble F(1) head domain (subunits alpha(3) and beta(3)) - the catalytic core - and a membrane F(0) domain - the membrane proton channel (subunits c, a, 8, e, f, g, k and j). These two domains are linked by a central stalk (subunits gamma, delta, and epsilon) rotating inside the F1 region and a stationary peripheral stalk (subunits F6, b, d, and OSCP).

The protein resides in the mitochondrion membrane. Subunit 8, of the mitochondrial membrane ATP synthase complex (F(1)F(0) ATP synthase or Complex V) that produces ATP from ADP in the presence of a proton gradient across the membrane which is generated by electron transport complexes of the respiratory chain. ATP synthase complex consist of a soluble F(1) head domain - the catalytic core - and a membrane F(1) domain - the membrane proton channel. These two domains are linked by a central stalk rotating inside the F(1) region and a stationary peripheral stalk. During catalysis, ATP synthesis in the catalytic domain of F(1) is coupled via a rotary mechanism of the central stalk subunits to proton translocation. In vivo, can only synthesize ATP although its ATP hydrolase activity can be activated artificially in vitro. Part of the complex F(0) domain. This is ATP synthase F(0) complex subunit 8 from Formosania lacustris (Oriental stream loach).